A 349-amino-acid polypeptide reads, in one-letter code: Dihydroorotate dehydrogenase (quinone) (349 aa).

Residues 67–71 and Thr91 contribute to the FMN site; that span reads AGLDK. Lys71 serves as a coordination point for substrate. A substrate-binding site is contributed by 116 to 120; sequence NRLGF. Positions 147 and 180 each coordinate FMN. Asn180 is a binding site for substrate. The Nucleophile role is filled by Ser183. Substrate is bound at residue Asn185. Lys225 and Thr253 together coordinate FMN. 254 to 255 serves as a coordination point for substrate; sequence NT. FMN-binding positions include Gly276, Gly305, and 326–327; that span reads YT.

This sequence belongs to the dihydroorotate dehydrogenase family. Type 2 subfamily. In terms of assembly, monomer. FMN serves as cofactor.

The protein localises to the cell membrane. It catalyses the reaction (S)-dihydroorotate + a quinone = orotate + a quinol. It participates in pyrimidine metabolism; UMP biosynthesis via de novo pathway; orotate from (S)-dihydroorotate (quinone route): step 1/1. Catalyzes the conversion of dihydroorotate to orotate with quinone as electron acceptor. The chain is Dihydroorotate dehydrogenase (quinone) from Bordetella avium (strain 197N).